Reading from the N-terminus, the 133-residue chain is Large ribosomal subunit protein bL17 (133 aa).

This sequence belongs to the bacterial ribosomal protein bL17 family. As to quaternary structure, part of the 50S ribosomal subunit. Contacts protein L32.

In Idiomarina loihiensis (strain ATCC BAA-735 / DSM 15497 / L2-TR), this protein is Large ribosomal subunit protein bL17.